A 276-amino-acid chain; its full sequence is 4-deoxy-L-threo-5-hexosulose-uronate ketol-isomerase 1 (276 aa).

4 residues coordinate Zn(2+): His194, His196, Glu201, and His243.

Belongs to the KduI family. It depends on Zn(2+) as a cofactor.

It catalyses the reaction 5-dehydro-4-deoxy-D-glucuronate = 3-deoxy-D-glycero-2,5-hexodiulosonate. It functions in the pathway glycan metabolism; pectin degradation; 2-dehydro-3-deoxy-D-gluconate from pectin: step 4/5. In terms of biological role, catalyzes the isomerization of 5-dehydro-4-deoxy-D-glucuronate to 3-deoxy-D-glycero-2,5-hexodiulosonate. In Enterococcus faecalis (strain ATCC 700802 / V583), this protein is 4-deoxy-L-threo-5-hexosulose-uronate ketol-isomerase 1 (kduI1).